We begin with the raw amino-acid sequence, 305 residues long: MNLSSVYVLASLAVVCLLVKETQAEYLCGSTLADVLSFVCGNRGYNSQPRRSVSKRAIDFISEQQAKDYMGAMPHIRRRRGLVEECCYNVCDYSQLESYCNPYSTAPATATPVRTTEPQPEEAEDDPLDGMVGDQAPLGSIENIENLVYHYDSDDITIDAAKMEPKKLKEILGSFEDKKANPVFPFIRQSKNIKPNKFPDSFAHQFPTDLVEEEPTNEIPESPSQKPTLERLGYKHNQTDKKEPTENNNNNNRARDNRTKSSTVEPHTVPDYISKQYTHKPLITLPRGTPRRIESRDSYHLTELR.

Positions 1–22 (MNLSSVYVLASLAVVCLLVKET) are cleaved as a signal peptide. Cystine bridges form between Cys-28–Cys-87, Cys-40–Cys-100, and Cys-86–Cys-91. Positions 52–76 (SVSKRAIDFISEQQAKDYMGAMPHI) are cleaved as a propeptide — connecting peptide. A d region spans residues 102–114 (PYSTAPATATPVR). Positions 102-305 (PYSTAPATAT…RDSYHLTELR (204 aa)) are cleaved as a propeptide — d/E peptide. Positions 107-118 (PATATPVRTTEP) are enriched in low complexity. Disordered stretches follow at residues 107–130 (PATA…PLDG) and 236–305 (HNQT…TELR). The e stretch occupies residues 115–305 (TTEPQPEEAE…RDSYHLTELR (191 aa)). A compositionally biased stretch (acidic residues) spans 119 to 128 (QPEEAEDDPL). Composition is skewed to basic and acidic residues over residues 236-245 (HNQTDKKEPT) and 291-305 (RRIE…TELR).

This sequence belongs to the insulin family.

It is found in the secreted. This chain is Insulin-like peptide (ILP), found in Branchiostoma californiense (California lancelet).